A 693-amino-acid polypeptide reads, in one-letter code: MYWQLVRILVLFDCLQKILAIEHDSICIADVDDACPEPSHTVMRLRERNDKKAHLIAKQHGLEIRGQPFLDGKSYFVTHISKQRSRRRKREIISRLQEHPDILSIEEQRPRVRRKRDFLYPDIAHELAGSSTNIRHTGLISNTEPRIDFIQHDAPVLPFPDPLYKEQWYLNNGAQGGFDMNVQAAWLLGYAGRNISVSILDDGIQRDHPDLAANYDPLASTDINGHDDDPTPQDDGDNKHGTRCAGEVASIAGNVYCGVGVAFHAKIGGVRMLDGPVSDSVEAASLSLNRHHIDIYSASWGPEDDGRTFDGPGPLAREAFYRGVKAGRGGKGSIFVWASGNGGSRQDSCSADGYTTSVYTLSVSSATIDNRSPWYLEECPSTIATTYSSANMNQPAIITVDVPHGCTRSHTGTSASAPLAAGIIALALEANPNLTWRDMQHIVLRTANPVPLLNNPGWSVNGVGRRINNKFGYGLMDAGALVKLALIWKTVPEQHICTYDYKLEKPNPRPITGNFQMNFSLEVNGCESGTPVLYLEHVQVLATFRFGKRGDLKLTLFSPRGTSSVLLPPRPQDFNSNGIHKWPFLSVQTWGEDPRGKWTLMVESVSTNRNVGGTFHDWSLLLYGTAEPAQPNDPRHSSVVPSSVSAESPFDRITQHIASQEKKKKQRDSRDWQPKKVENKKSLLVSAQPELRV.

The first 20 residues, 1–20, serve as a signal peptide directing secretion; sequence MYWQLVRILVLFDCLQKILA. Positions 21–116 are cleaved as a propeptide — inhibition peptide; that stretch reads IEHDSICIAD…EQRPRVRRKR (96 aa). D161 lines the Ca(2+) pocket. The Peptidase S8 domain maps to 167–482; that stretch reads QWYLNNGAQG…YGLMDAGALV (316 aa). The N-linked (GlcNAc...) asparagine glycan is linked to N194. The Charge relay system role is filled by D201. D202 serves as a coordination point for substrate. The Ca(2+) site is built by D210, D222, D227, and D229. Positions 215-242 are disordered; it reads YDPLASTDINGHDDDPTPQDDGDNKHGT. Position 237–238 (237–238) interacts with substrate; sequence DN. H240 serves as the catalytic Charge relay system. Ca(2+) contacts are provided by I251, N254, Y256, and G258. 2 disulfide bridges follow: C257–C406 and C349–C379. Substrate-binding positions include E282, 299-304, D310, and 338-341; these read SWGPED and ASGN. Residue D304 participates in Ca(2+) binding. A Ca(2+)-binding site is contributed by D347. Residues D352 and Y354 each contribute to the substrate site. Residue E377 coordinates Ca(2+). S414 acts as the Charge relay system in catalysis. S414 contacts substrate. Residues N433 and N518 are each glycosylated (N-linked (GlcNAc...) asparagine). In terms of domain architecture, P/Homo B spans 490 to 628; sequence TVPEQHICTY…SLLLYGTAEP (139 aa). Residues C497 and C526 are joined by a disulfide bond. Residues 629 to 693 form a disordered region; sequence AQPNDPRHSS…LVSAQPELRV (65 aa). Basic and acidic residues predominate over residues 668-681; sequence DSRDWQPKKVENKK.

This sequence belongs to the peptidase S8 family. Furin subfamily. Ca(2+) is required as a cofactor. N-glycosylated. Post-translationally, the inhibition peptide, which plays the role of an intramolecular chaperone, is probably autocatalytically removed in the endoplasmic reticulum (ER) and remains non-covalently bound as a potent autoinhibitor. Probably following transport to the trans Golgi, a second cleavage within the inhibition propeptide results in propeptide dissociation and bli activation.

Its subcellular location is the secreted. The enzyme catalyses Release of mature proteins from their proproteins by cleavage of -Arg-Xaa-Yaa-Arg-|-Zaa- bonds, where Xaa can be any amino acid and Yaa is Arg or Lys. Releases albumin, complement component C3 and von Willebrand factor from their respective precursors.. Its activity is regulated as follows. Inhibited by the propeptide before the second cleavage. Inhibited by ethylenediaminetetraacetic acid (EDTA), ZnSO(4) and chloroketone DEC-RVKR-CMK. Serine endoprotease which cleaves substrates at the RX(K/R)R consensus motif. This Onchocerca volvulus protein is Endoprotease bli.